We begin with the raw amino-acid sequence, 582 residues long: Vesicular glutamate transporter 2 (582 aa).

At 1–71 the chain is on the cytoplasmic side; it reads MESVKQRILA…CTCFGLPRRY (71 aa). Residues 72 to 92 form a helical membrane-spanning segment; that stretch reads IIAIMSGLGFCISFGIRCNLG. Over 93-125 the chain is Vesicular; that stretch reads VAIVDMVNNSTIHRGGKVIKEKAKFNWDPETVG. N-linked (GlcNAc...) asparagine glycans are attached at residues asparagine 100 and asparagine 101. A helical membrane pass occupies residues 126-146; it reads MIHGSFFWGYIITQIPGGYIA. Over 147 to 148 the chain is Cytoplasmic; it reads SR. Residues 149 to 169 form a helical membrane-spanning segment; it reads LAANRVFGAAILLTSTLNMLI. The Vesicular segment spans residues 170–177; the sequence is PSAARVHY. Residues 178-198 form a helical membrane-spanning segment; that stretch reads GCVIFVRILQGLVEGVTYPAC. The Cytoplasmic portion of the chain corresponds to 199–216; the sequence is HGIWSKWAPPLERSRLAT. A helical membrane pass occupies residues 217-237; sequence TSFCGSYAGAVIAMPLAGILV. At 238–244 the chain is on the vesicular side; it reads QYTGWSS. A helical transmembrane segment spans residues 245 to 265; that stretch reads VFYVYGSFGMVWYMFWLLVSY. Topologically, residues 266–310 are cytoplasmic; sequence ESPAKHPTITDEERRYIEESIGESANLLGAMEKFKTPWRKFFTSM. A helical membrane pass occupies residues 311 to 331; that stretch reads PVYAIIVANFCRSWTFYLLLI. The Vesicular portion of the chain corresponds to 332-349; the sequence is SQPAYFEEVFGFEISKVG. Residues 350–370 traverse the membrane as a helical segment; sequence MLSAVPHLVMTIIVPIGGQIA. Over 371-386 the chain is Cytoplasmic; that stretch reads DFLRSKQILSTTTVRK. Residues 387 to 407 traverse the membrane as a helical segment; that stretch reads IMNCGGFGMEATLLLVVGYSH. Residues 408 to 409 are Vesicular-facing; it reads TR. A helical transmembrane segment spans residues 410–430; that stretch reads GVAISFLVLAVGFSGFAISGF. At 431–443 the chain is on the cytoplasmic side; the sequence is NVNHLDIAPRYAS. The helical transmembrane segment at 444–464 threads the bilayer; sequence ILMGISNGVGTLSGMVCPIIV. At 465 to 477 the chain is on the vesicular side; it reads GAMTKNKSREEWQ. Asparagine 470 carries N-linked (GlcNAc...) asparagine glycosylation. The chain crosses the membrane as a helical span at residues 478–498; sequence YVFLIAALVHYGGVIFYAIFA. Residues 499–582 are Cytoplasmic-facing; that stretch reads SGEKQPWADP…HSYKDRVDYS (84 aa).

This sequence belongs to the major facilitator superfamily. Sodium/anion cotransporter family. VGLUT subfamily. In terms of tissue distribution, predominantly expressed in adult brain. Expressed in amygdala, caudate nucleus, cerebral cortex, frontal lobe, hippocampus, medulla, occipital lobe, putamen, spinal cord, substantia nigra, subthalamic nucleus, temporal lobe and thalamus.

It localises to the cytoplasmic vesicle. Its subcellular location is the secretory vesicle. The protein localises to the synaptic vesicle membrane. The protein resides in the synapse. It is found in the synaptosome. It localises to the cell membrane. It catalyses the reaction L-glutamate(out) = L-glutamate(in). It carries out the reaction 3 Na(+)(out) + phosphate(out) = 3 Na(+)(in) + phosphate(in). The enzyme catalyses phosphate(in) = phosphate(out). The catalysed reaction is K(+)(in) + H(+)(out) = K(+)(out) + H(+)(in). It catalyses the reaction chloride(in) = chloride(out). Its activity is regulated as follows. Chloride channel activity is allosterically activated by lumenal H(+) and Cl(-) leading to synaptic vesicles acidification. The L-glutamate transport activity is allosterically activated by lumenal H(+) and Cl(-). The allosteric requirement for H(+) efficiently prevents non-vesicular efflux across the plasma membrane. The L-glutamate uniporter activity exhibits a biphasic dependence on chloride concentration. Multifunctional transporter that transports L-glutamate as well as multiple ions such as chloride, proton, potassium, sodium and phosphate. At the synaptic vesicle membrane, mainly functions as a uniporter which transports preferentially L-glutamate but also, phosphate from the cytoplasm into synaptic vesicles at presynaptic nerve terminals of excitatory neural cells. The L-glutamate or phosphate uniporter activity is electrogenic and is driven by the proton electrochemical gradient, mainly by the electrical gradient established by the vacuolar H(+)-ATPase across the synaptic vesicle membrane. In addition, functions as a chloride channel that allows the chloride permeation through the synaptic vesicle membrane therefore affects the proton electrochemical gradient and promotes synaptic vesicles acidification. Moreover, functions as a vesicular K(+)/H(+) antiport allowing to maintain the electrical gradient and to decrease chemical gradient and therefore sustain vesicular glutamate uptake. The vesicular H(+)/H(+) antiport activity is electroneutral. At the plasma membrane, following exocytosis, functions as a symporter of Na(+) and phosphate from the extracellular space to the cytoplasm allowing synaptic phosphate homeostasis regulation. The symporter activity is driven by an inside negative membrane potential and is electrogenic. Also involved in the regulation of retinal hyaloid vessel regression during postnatal development. May also play a role in the endocrine glutamatergic system of other tissues such as pineal gland and pancreas. This is Vesicular glutamate transporter 2 from Homo sapiens (Human).